Reading from the N-terminus, the 157-residue chain is Transcriptional regulator MraZ (157 aa).

2 consecutive SpoVT-AbrB domains span residues 7–54 and 83–126; these read TYEC…PMKE and VRII…DKDL.

It belongs to the MraZ family. In terms of assembly, forms oligomers.

It localises to the cytoplasm. The protein resides in the nucleoid. The sequence is that of Transcriptional regulator MraZ from Flavobacterium psychrophilum (strain ATCC 49511 / DSM 21280 / CIP 103535 / JIP02/86).